We begin with the raw amino-acid sequence, 182 residues long: Large ribosomal subunit protein uL5 (182 aa).

This sequence belongs to the universal ribosomal protein uL5 family. In terms of assembly, part of the 50S ribosomal subunit; part of the 5S rRNA/L5/L18/L25 subcomplex. Contacts the 5S rRNA and the P site tRNA. Forms a bridge to the 30S subunit in the 70S ribosome.

In terms of biological role, this is one of the proteins that bind and probably mediate the attachment of the 5S RNA into the large ribosomal subunit, where it forms part of the central protuberance. In the 70S ribosome it contacts protein S13 of the 30S subunit (bridge B1b), connecting the 2 subunits; this bridge is implicated in subunit movement. Contacts the P site tRNA; the 5S rRNA and some of its associated proteins might help stabilize positioning of ribosome-bound tRNAs. This Thermus aquaticus protein is Large ribosomal subunit protein uL5.